A 153-amino-acid chain; its full sequence is TM2 domain-containing protein DDB_G0277895 (153 aa).

Positions Gln3–Ile50 constitute a TM2 domain. Helical transmembrane passes span Val6–Leu26 and Val33–Ile53. Positions Gly85 to Gln153 are disordered. 6 tandem repeats follow at residues Gln89–Pro96, Gln97–Pro104, Gln105–Pro112, Gln113–Pro120, Gln121–Pro128, and Pro129–Pro136. A 6 X 8 AA tandem repeat of Q-Q-P-Y-G-A-P-P region spans residues Gln89 to Pro136. Over residues Gly93 to Gln153 the composition is skewed to pro residues.

This sequence belongs to the TM2 family.

The protein localises to the membrane. This chain is TM2 domain-containing protein DDB_G0277895, found in Dictyostelium discoideum (Social amoeba).